The sequence spans 201 residues: Twin horsetail protein 2 (201 aa).

The protein resides in the nucleus. Functionally, required for correct meiotic chromosome segregation and recombination. The protein is Twin horsetail protein 2 (tht2) of Schizosaccharomyces pombe (strain 972 / ATCC 24843) (Fission yeast).